Consider the following 582-residue polypeptide: 5-aminolevulinate synthase, erythroid-specific, mitochondrial (582 aa).

A mitochondrion-targeting transit peptide spans 1 to 44; sequence MLLQRCPVLIRSPTAILGKMIKTHQFLIGIGRCPILATQGTTCS. Succinyl-CoA is bound at residue Arg158. Residues Cys253 and Phe254 each coordinate pyridoxal 5'-phosphate. Ser275 and Lys294 together coordinate succinyl-CoA. Residues Ser327, His355, and Thr383 each coordinate pyridoxal 5'-phosphate. Residue Lys386 is part of the active site. At Lys386 the chain carries N6-(pyridoxal phosphate)lysine. Pyridoxal 5'-phosphate-binding residues include Thr415 and Thr416. Thr503 contacts succinyl-CoA.

It belongs to the class-II pyridoxal-phosphate-dependent aminotransferase family. Homodimer. The cofactor is pyridoxal 5'-phosphate.

Its subcellular location is the mitochondrion inner membrane. It carries out the reaction succinyl-CoA + glycine + H(+) = 5-aminolevulinate + CO2 + CoA. The protein operates within porphyrin-containing compound metabolism; protoporphyrin-IX biosynthesis; 5-aminolevulinate from glycine: step 1/1. In terms of biological role, catalyzes the pyridoxal 5'-phosphate (PLP)-dependent condensation of succinyl-CoA and glycine to form aminolevulinic acid (ALA), with CoA and CO2 as by-products. Contributes significantly to heme formation during erythropoiesis. The protein is 5-aminolevulinate synthase, erythroid-specific, mitochondrial (ALAS2) of Delphinapterus leucas (Beluga whale).